Reading from the N-terminus, the 1000-residue chain is Ribosome assembly protein 1 (1000 aa).

Positions 17 to 246 (ENIRNFTLLA…YEKKLGLKQK (230 aa)) constitute a tr-type G domain. Residues 26–33 (AHVDHGKT), 100–104 (DSPGH), and 154–157 (NKMD) contribute to the GTP site.

It belongs to the TRAFAC class translation factor GTPase superfamily. Classic translation factor GTPase family.

The protein localises to the cytoplasm. It catalyses the reaction GTP + H2O = GDP + phosphate + H(+). With respect to regulation, GTPase activity is stimulated in the presence of 60S subunits. In terms of biological role, GTPase involved in the biogenesis of the 60S ribosomal subunit and translational activation of ribosomes. Together with sdo1, may trigger the GTP-dependent release of tif6 from 60S pre-ribosomes in the cytoplasm, thereby activating ribosomes for translation competence by allowing 80S ribosome assembly and facilitating tif6 recycling to the nucleus, where it is required for 60S rRNA processing and nuclear export. Inhibits GTPase activity of ribosome-bound EF-2. This is Ribosome assembly protein 1 (ria1) from Schizosaccharomyces pombe (strain 972 / ATCC 24843) (Fission yeast).